A 411-amino-acid chain; its full sequence is Thyroid hormone receptor beta (411 aa).

A disordered region spans residues 1–24 (MTPNSMTENGLPAWDKPKPCPDGE). A modulating region spans residues 1 to 104 (MTPNSMTENG…IPSYLDKDEL (104 aa)). A compositionally biased stretch (basic and acidic residues) spans 15–24 (DKPKPCPDGE). 8 residues coordinate Zn(2+): cysteine 105, cysteine 108, cysteine 122, cysteine 125, cysteine 143, cysteine 149, cysteine 159, and cysteine 162. 2 NR C4-type zinc fingers span residues 105 to 125 (CVVCGDKATGYHYRCITCEGC) and 143 to 167 (CKYEGKCVIDKVTRNQCQECRFKKC). Residues 105–179 (CVVCGDKATG…VGMATDLVLD (75 aa)) constitute a DNA-binding region (nuclear receptor). In terms of domain architecture, NR LBD spans 215-411 (QEWELIKTVT…EHYINYRRNS (197 aa)). The segment at 242–411 (KFLPEDIGQA…EHYINYRRNS (170 aa)) is interaction with NR2F6. The 3,3',5-triiodo-L-thyronine site is built by arginine 280 and asparagine 329. Residues arginine 280 and asparagine 329 each contribute to the L-thyroxine site.

Belongs to the nuclear hormone receptor family. NR1 subfamily. Binds DNA as a dimer; homodimer and heterodimer with RXRA. Interacts with the coactivators NCOA1/SRC1, NCOA2/GRIP1, NCOA7 and MED1/TRAP220 in a ligand-inducible manner. Interacts with the corepressor NCOR1 in absence of ligand. Interacts with C1D. Interacts with NR2F6; the interaction impairs the binding of the THRB homodimer and THRB:RXRB heterodimer to T3 response elements. Interacts with PRMT2 and THRSP. Interacts with TACC1; this interaction is decreased in the presence of thyroid hormone T3.

The protein resides in the nucleus. Functionally, nuclear hormone receptor that can act as a repressor or activator of transcription. High affinity receptor for thyroid hormones, including triiodothyronine and thyroxine. The polypeptide is Thyroid hormone receptor beta (THRB) (Ovis aries (Sheep)).